The chain runs to 971 residues: UPF0182 protein RER_22310 (971 aa).

The next 7 helical transmembrane spans lie at 16–36 (ILLV…RLIG), 61–81 (FVLF…AMLL), 112–132 (LFGV…AQAN), 172–192 (WLFV…YVFG), 209–229 (VQLA…YWFD), 257–277 (AKLI…ASIF), and 286–306 (MAVA…PMIV). Residues 890 to 927 (GSAATVTQPAPDPDTGAQPETPTTPTAPAPPASSDDVT) are disordered.

This sequence belongs to the UPF0182 family.

It localises to the cell membrane. The polypeptide is UPF0182 protein RER_22310 (Rhodococcus erythropolis (strain PR4 / NBRC 100887)).